The following is a 347-amino-acid chain: NADH-ubiquinone oxidoreductase chain 2 (347 aa).

9 helical membrane-spanning segments follow: residues 3 to 23, 59 to 79, 93 to 115, 150 to 170, 178 to 198, 200 to 220, 240 to 260, 274 to 294, and 326 to 346; these read PLALSLILTTLFTGTLITMMS, YFMTQATASMMLMMALTINLM, VASNVALMALMTKLGSAPFHFWV, NTNLIYLSGLLSILIGGWGGL, ILAYSSISHMGWMLIILPFNP, LTLLNLAIYILLTLSIFMILA, MTIMLMTTLLSLGGLPPLSGF, NSIIMPLTMAIMTLLNMYFYT, and LPTLITLSNMLLPLTPMISML.

This sequence belongs to the complex I subunit 2 family. As to quaternary structure, core subunit of respiratory chain NADH dehydrogenase (Complex I) which is composed of 45 different subunits. Interacts with TMEM242.

The protein localises to the mitochondrion inner membrane. The catalysed reaction is a ubiquinone + NADH + 5 H(+)(in) = a ubiquinol + NAD(+) + 4 H(+)(out). Its function is as follows. Core subunit of the mitochondrial membrane respiratory chain NADH dehydrogenase (Complex I) which catalyzes electron transfer from NADH through the respiratory chain, using ubiquinone as an electron acceptor. Essential for the catalytic activity and assembly of complex I. This chain is NADH-ubiquinone oxidoreductase chain 2, found in Elephas maximus (Indian elephant).